A 186-amino-acid polypeptide reads, in one-letter code: Ribosome-recycling factor (186 aa).

It belongs to the RRF family.

The protein resides in the cytoplasm. Its function is as follows. Responsible for the release of ribosomes from messenger RNA at the termination of protein biosynthesis. May increase the efficiency of translation by recycling ribosomes from one round of translation to another. The chain is Ribosome-recycling factor from Rhodopseudomonas palustris (strain ATCC BAA-98 / CGA009).